A 280-amino-acid polypeptide reads, in one-letter code: L-proline cis-4-hydroxylase (280 aa).

Positions 106, 108, and 154 each coordinate Fe cation. Position 164 (R164) interacts with 2-oxoglutarate.

This sequence belongs to the L-proline cis-4-/cis-3-hydroxylase family. It depends on Fe(2+) as a cofactor.

It carries out the reaction L-proline + 2-oxoglutarate + O2 = cis-4-hydroxy-L-proline + succinate + CO2. With respect to regulation, inhibited by metal ions such as Co(2+), Zn(2+), Cu(2+) or Ni(2+). Is also inhibited by EDTA or diethylpyrocarbonate (DEPC) in vitro. Unlike the procollagen-proline cis-3- and trans-4-hydroxylases from mammals, does not necessarily require L-ascorbate for activity although it does increase the activity of the enzyme. Its function is as follows. Dioxygenase that catalyzes the 2-oxoglutarate-dependent selective hydroxylation of free L-proline to cis-4-hydroxy-L-proline (cis-4-Hyp). The polypeptide is L-proline cis-4-hydroxylase (Rhizobium meliloti (strain 1021) (Ensifer meliloti)).